We begin with the raw amino-acid sequence, 288 residues long: Lipoyl synthase (288 aa).

Residues Cys-39, Cys-44, Cys-50, Cys-65, Cys-69, Cys-72, and Ser-276 each contribute to the [4Fe-4S] cluster site. Residues 51-265 (WGKGTATFMI…KETGLKKGFE (215 aa)) form the Radical SAM core domain.

It belongs to the radical SAM superfamily. Lipoyl synthase family. It depends on [4Fe-4S] cluster as a cofactor.

It is found in the cytoplasm. The enzyme catalyses [[Fe-S] cluster scaffold protein carrying a second [4Fe-4S](2+) cluster] + N(6)-octanoyl-L-lysyl-[protein] + 2 oxidized [2Fe-2S]-[ferredoxin] + 2 S-adenosyl-L-methionine + 4 H(+) = [[Fe-S] cluster scaffold protein] + N(6)-[(R)-dihydrolipoyl]-L-lysyl-[protein] + 4 Fe(3+) + 2 hydrogen sulfide + 2 5'-deoxyadenosine + 2 L-methionine + 2 reduced [2Fe-2S]-[ferredoxin]. It participates in protein modification; protein lipoylation via endogenous pathway; protein N(6)-(lipoyl)lysine from octanoyl-[acyl-carrier-protein]: step 2/2. Catalyzes the radical-mediated insertion of two sulfur atoms into the C-6 and C-8 positions of the octanoyl moiety bound to the lipoyl domains of lipoate-dependent enzymes, thereby converting the octanoylated domains into lipoylated derivatives. This chain is Lipoyl synthase, found in Bacteroides fragilis (strain YCH46).